Reading from the N-terminus, the 336-residue chain is D-alanine--D-alanine ligase (336 aa).

In terms of domain architecture, ATP-grasp spans 124–330 (KMWFSALGIP…FTQYLSLVIN (207 aa)). 154–209 (ALEKWGSIFVKAASQGSSVGCYKVDEASKVLGVLKDAFGYAPYVIVEKTIKARELE) serves as a coordination point for ATP. Mg(2+) is bound by residues Asp-284, Glu-297, and Asn-299.

The protein belongs to the D-alanine--D-alanine ligase family. Mg(2+) is required as a cofactor. It depends on Mn(2+) as a cofactor.

Its subcellular location is the cytoplasm. It catalyses the reaction 2 D-alanine + ATP = D-alanyl-D-alanine + ADP + phosphate + H(+). Its pathway is cell wall biogenesis; peptidoglycan biosynthesis. Cell wall formation. The protein is D-alanine--D-alanine ligase of Shewanella oneidensis (strain ATCC 700550 / JCM 31522 / CIP 106686 / LMG 19005 / NCIMB 14063 / MR-1).